A 285-amino-acid polypeptide reads, in one-letter code: Acetylglutamate kinase (285 aa).

Substrate-binding positions include 64–65 (GG), R86, and N180.

This sequence belongs to the acetylglutamate kinase family. ArgB subfamily.

The protein localises to the plastid. It is found in the chloroplast. It carries out the reaction N-acetyl-L-glutamate + ATP = N-acetyl-L-glutamyl 5-phosphate + ADP. Its pathway is amino-acid biosynthesis; L-arginine biosynthesis; N(2)-acetyl-L-ornithine from L-glutamate: step 2/4. Catalyzes the ATP-dependent phosphorylation of N-acetyl-L-glutamate. This chain is Acetylglutamate kinase, found in Gracilaria tenuistipitata var. liui (Red alga).